A 309-amino-acid chain; its full sequence is Malate dehydrogenase (309 aa).

NAD(+) is bound by residues 9–14 and aspartate 33; that span reads GAGFVG. Residues arginine 82 and arginine 88 each coordinate substrate. Residues asparagine 95 and 118–120 each bind NAD(+); that span reads VNN. Residues asparagine 120 and arginine 151 each contribute to the substrate site. Histidine 175 acts as the Proton acceptor in catalysis.

This sequence belongs to the LDH/MDH superfamily. MDH type 3 family.

The catalysed reaction is (S)-malate + NAD(+) = oxaloacetate + NADH + H(+). Catalyzes the reversible oxidation of malate to oxaloacetate. The protein is Malate dehydrogenase of Chloroflexus aurantiacus (strain ATCC 29364 / DSM 637 / Y-400-fl).